Consider the following 219-residue polypeptide: MVRGKTEMKRIENATSRQVTFSKRRNGLLKKAFELSVLCDAEVALVIFSPRSKLYEFSSSSIAATIERYQRRIKEIGNNHKRNDNSQQARDETSGLTKKIEQLEISKRKLLGEGIDACSIEELQQLENQLDRSLSRIRAKKYQLLREEIEKLKAEERNLVKENKDLKEKWLGMGTATIASSQSTLSSSEVNIDDNMEVETGLFIGPPETRQSKKFPPQN.

One can recognise an MADS-box domain in the interval 1 to 61 (MVRGKTEMKR…SKLYEFSSSS (61 aa)). The tract at residues 77 to 96 (GNNHKRNDNSQQARDETSGL) is disordered. Residues 86 to 176 (SQQARDETSG…KEKWLGMGTA (91 aa)) enclose the K-box domain.

In terms of assembly, interacts with SOC1 and AGL21. Mostly expressed in the outer layers of the root meristem (lateral root cap and epidermis) and in the central cylinder cells of mature roots. Also present in rosette leaves and seedlings and, to a lesser extent, in cauline leaves and flowers. Enriched in apices including the shoot apical meristem and developing leaf primordia.

It is found in the nucleus. Probable transcription factor that promotes flowering, especially in response to vernalization by short periods of cold, in an FLC-inpedendent manner. The sequence is that of Agamous-like MADS-box protein AGL19 (AGL19) from Arabidopsis thaliana (Mouse-ear cress).